Consider the following 222-residue polypeptide: Chromatin-associated protein SWI6 (222 aa).

Residues 1 to 15 show a composition bias toward basic and acidic residues; that stretch reads MPVIKKEELSQKKDL. 2 disordered regions span residues 1 to 26 and 77 to 147; these read MPVI…GLED and ETQD…DRQY. A compositionally biased stretch (acidic residues) spans 16-26; the sequence is ESEEEDSGLED. The 60-residue stretch at 28–87 folds into the Chromo domain; the sequence is YEVEKVIKHRGKGKNIEFLVRWKGYGPEYDTWEPTENVASAEEAVAAYWETQDKTATAPR.

Interacts with DMT5.

It localises to the nucleus. Recognizes and binds histone H3 tails methylated at 'Lys-9', leading to epigenetic repression. Localizes DMT5 to heterochromatin characterized by trimethylation of histone H3 tails at 'Lys-9'. This is Chromatin-associated protein SWI6 from Cryptococcus neoformans var. grubii serotype A (strain H99 / ATCC 208821 / CBS 10515 / FGSC 9487) (Filobasidiella neoformans var. grubii).